We begin with the raw amino-acid sequence, 1203 residues long: Metabotropic glutamate receptor 5 (1203 aa).

An N-terminal signal peptide occupies residues M1–G18. At S19–P579 the chain is on the extracellular side. C57 and C99 are oxidised to a cystine. Y64 lines the L-glutamate pocket. A glycan (N-linked (GlcNAc...) asparagine) is linked at N88. L-glutamate contacts are provided by residues S151 and S172 to T174. A glycan (N-linked (GlcNAc...) asparagine) is linked at N209. Y222 is an L-glutamate binding site. Intrachain disulfides connect C240-C529, C275-C277, C364-C380, C418-C425, C510-C530, C514-C533, C536-C548, and C551-C564. Residue D304 participates in L-glutamate binding. N377 and N381 each carry an N-linked (GlcNAc...) asparagine glycan. K395 serves as a coordination point for L-glutamate. N-linked (GlcNAc...) asparagine glycosylation occurs at N444. A helical transmembrane segment spans residues I580–I602. Over Y603 to S612 the chain is Cytoplasmic. Residues S613–I635 form a helical membrane-spanning segment. Residues A636–C643 are Extracellular-facing. An intrachain disulfide couples C643 to C732. The chain crosses the membrane as a helical span at residues Y644–N666. The Cytoplasmic portion of the chain corresponds to R667–Q692. The helical transmembrane segment at L693 to M713 threads the bilayer. At E714–N736 the chain is on the extracellular side. An N-linked (GlcNAc...) asparagine glycan is attached at N733. Residues L737 to F758 form a helical membrane-spanning segment. The Cytoplasmic segment spans residues K759–K771. Residues Y772–S794 form a helical membrane-spanning segment. Topologically, residues N795 to K797 are extracellular. Residues I798–P819 traverse the membrane as a helical segment. The Cytoplasmic segment spans residues K820–L1203. S860 carries the post-translational modification Phosphoserine. R868 carries the post-translational modification Omega-N-methylarginine. 2 disordered regions span residues F892–M1054 and T1120–I1182. A compositionally biased stretch (polar residues) spans T905 to E920. Residue R924 is modified to Omega-N-methylarginine. Residues Q960–S977 show a composition bias toward gly residues. A compositionally biased stretch (low complexity) spans P1007–S1019. S1014 and S1016 each carry phosphoserine. Composition is skewed to polar residues over residues H1039–M1054 and D1165–S1176.

This sequence belongs to the G-protein coupled receptor 3 family. The PPXXF motif binds HOMER1, HOMER2 and HOMER3. Interacts with RYR1, RYR2, ITPR1, SHANK1 and SHANK3. Interacts with SIAH1 and TAMALIN. Interacts with NCDN. Interacts with NECAB2. Interacts with CAMK2A.

It localises to the cell membrane. In terms of biological role, G-protein coupled receptor for glutamate. Ligand binding causes a conformation change that triggers signaling via guanine nucleotide-binding proteins (G proteins) and modulates the activity of down-stream effectors. Signaling activates a phosphatidylinositol-calcium second messenger system and generates a calcium-activated chloride current. Plays an important role in the regulation of synaptic plasticity and the modulation of the neural network activity. This chain is Metabotropic glutamate receptor 5 (Grm5), found in Mus musculus (Mouse).